The primary structure comprises 685 residues: DNA ligase (685 aa).

Residues 47–51 (DSEYD), 96–97 (SL), and Glu125 contribute to the NAD(+) site. Residue Lys127 is the N6-AMP-lysine intermediate of the active site. NAD(+)-binding residues include Arg148, Glu185, Lys304, and Lys328. Zn(2+)-binding residues include Cys422, Cys425, Cys440, and Cys446. The BRCT domain maps to 605-685 (ADAQPLKGQT…ALLALFAANR (81 aa)).

Belongs to the NAD-dependent DNA ligase family. LigA subfamily. The cofactor is Mg(2+). It depends on Mn(2+) as a cofactor.

It catalyses the reaction NAD(+) + (deoxyribonucleotide)n-3'-hydroxyl + 5'-phospho-(deoxyribonucleotide)m = (deoxyribonucleotide)n+m + AMP + beta-nicotinamide D-nucleotide.. In terms of biological role, DNA ligase that catalyzes the formation of phosphodiester linkages between 5'-phosphoryl and 3'-hydroxyl groups in double-stranded DNA using NAD as a coenzyme and as the energy source for the reaction. It is essential for DNA replication and repair of damaged DNA. This chain is DNA ligase, found in Shewanella putrefaciens (strain CN-32 / ATCC BAA-453).